Here is a 187-residue protein sequence, read N- to C-terminus: MIRGGDIAKGTVLLHKGAPYLVVEREFVNPGKGAAFARVKMKHLRDGSVLTQTVKTSDTVEDAVVDSHRAQYQYDDGECFVFMDTRSFEQIFVSKGNVPGRERYLREGDEYDILIWNGESIDIKIPTKMVFRVAHSEPYLKGDTVSGATKPVTTETGLVVRVPLFIKQGEKILINTETNEYQERVND.

It belongs to the elongation factor P family.

It localises to the cytoplasm. It participates in protein biosynthesis; polypeptide chain elongation. Functionally, involved in peptide bond synthesis. Stimulates efficient translation and peptide-bond synthesis on native or reconstituted 70S ribosomes in vitro. Probably functions indirectly by altering the affinity of the ribosome for aminoacyl-tRNA, thus increasing their reactivity as acceptors for peptidyl transferase. The chain is Elongation factor P (efp) from Treponema pallidum (strain Nichols).